The primary structure comprises 443 residues: Probable D-serine dehydratase (443 aa).

The residue at position 118 (Lys-118) is an N6-(pyridoxal phosphate)lysine.

It belongs to the serine/threonine dehydratase family. DsdA subfamily. The cofactor is pyridoxal 5'-phosphate.

The catalysed reaction is D-serine = pyruvate + NH4(+). The protein is Probable D-serine dehydratase of Colwellia psychrerythraea (strain 34H / ATCC BAA-681) (Vibrio psychroerythus).